Consider the following 780-residue polypeptide: Cullin-1 (780 aa).

A Cullin neddylation domain is found at 710 to 771 (DRKSVISACI…EKEYMLRTEG (62 aa)). Lys-724 is covalently cross-linked (Glycyl lysine isopeptide (Lys-Gly) (interchain with G-Cter in NEDD8)).

This sequence belongs to the cullin family. As to quaternary structure, component of an SCF (SKP1-CUL1-F-box protein) E3 ubiquitin ligase complex composed of cul-1, fsn-1, rpm-1 and skr-1. Interacts with Skp1-related proteins skr-1, skr-2, skr-3, skr-4, skr-7, skr-8, skr-9 and skr-10. In terms of processing, neddylated; which enhances the ubiquitination activity of SCF. Ubiquitous.

It is found in the cytoplasm. It functions in the pathway protein modification; protein ubiquitination. In terms of biological role, probable core component of multiple cullin-RING-based SCF (SKP1-CUL1-F-box) E3 ubiquitin-protein ligase complexes which mediate the ubiquitination and subsequent proteasomal degradation of target proteins. As a scaffold protein may contribute to catalysis through positioning of the substrate and the ubiquitin-conjugating enzyme. Required for developmentally programmed transitions from the G1 phase of the cell cycle to the G0 phase or the apoptotic pathway. The sequence is that of Cullin-1 (cul-1) from Caenorhabditis elegans.